A 358-amino-acid polypeptide reads, in one-letter code: Chondroadherin (358 aa).

Positions 1–20 are cleaved as a signal peptide; it reads MARVLLLSLVFLAILLPALA. An LRRNT domain is found at 21 to 50; that stretch reads ACPQNCHCHGDLQHVICDKVGLQKIPKVSE. A disulfide bridge links Cys-22 with Cys-37. LRR repeat units lie at residues 51-72, 75-96, 99-120, 123-144, 147-168, 171-192, 195-216, 219-240, 244-265, and 268-289; these read TTKL…SFRT, NLVS…AFRG, QLIY…AFDD, ELTY…LLSP, NLFI…AFQG, DLRW…SLDD, NLAK…ALSK, VVEE…AFQS, YLET…AFAG, and TLKH…FPFD. An O-linked (GalNAc...) serine glycan is attached at Ser-143. The LRRCT domain maps to 299 to 347; that stretch reads NPWKCTCQLRGLRRWLEAKTSRPDATCSSPAKFKGQRIRDTDALRSCKS. 2 cysteine pairs are disulfide-bonded: Cys-303/Cys-345 and Cys-305/Cys-325. Residues 321–358 are disordered; sequence PDATCSSPAKFKGQRIRDTDALRSCKSPTKRSKKAGRH. The span at 348 to 358 shows a compositional bias: basic residues; the sequence is PTKRSKKAGRH.

This sequence belongs to the small leucine-rich proteoglycan (SLRP) family. SLRP class IV subfamily. In terms of assembly, mostly monomeric. As to expression, present in femoral head and rib cartilage, as well as in tendon. Detected in bone marrow.

The protein resides in the secreted. It localises to the extracellular space. Its subcellular location is the extracellular matrix. In terms of biological role, promotes attachment of chondrocytes, fibroblasts, and osteoblasts. This binding is mediated (at least for chondrocytes and fibroblasts) by the integrin alpha(2)beta(1). May play an important role in the regulation of chondrocyte growth and proliferation. This Rattus norvegicus (Rat) protein is Chondroadherin (Chad).